A 927-amino-acid chain; its full sequence is Sodium/calcium exchanger 3 (927 aa).

The N-terminal stretch at 1 to 30 (MAWLRLQPLTSAFLHFGLVTFVLFLNGLRA) is a signal peptide. At 31–73 (EAGGSGDVPSTGQNNESCSGSSDCKEGVILPIWYPENPSLGDK) the chain is on the extracellular side. A glycan (N-linked (GlcNAc...) asparagine) is linked at Asn45. Residues 74–94 (IARVIVYFVALIYMFLGVSII) traverse the membrane as a helical segment. Residues 95–147 (ADRFMASIEVITSQEREVTIKKPNGETSTTTIRVWNETVSNLTLMALGSSAPE) lie on the Cytoplasmic side of the membrane. Residues 140–180 (ALGSSAPEILLSLIEVCGHGFIAGDLGPSTIVGSAAFNMFI) form an Alpha-1 repeat. A helical transmembrane segment spans residues 148 to 168 (ILLSLIEVCGHGFIAGDLGPS). Thr169 is a topological domain (extracellular). Residues 170-190 (IVGSAAFNMFIIIGICVYVIP) form a helical membrane-spanning segment. Topologically, residues 191 to 202 (DGETRKIKHLRV) are cytoplasmic. The chain crosses the membrane as a helical span at residues 203-223 (FFITAAWSIFAYIWLYMILAV). Topologically, residues 224–230 (FSPGVVQ) are extracellular. Residues 231–251 (VWEGLLTLFFFPVCVLLAWVA) form a helical membrane-spanning segment. Over 252–726 (DKRLLFYKYM…DESGEERLPS (475 aa)) the chain is Cytoplasmic. The tract at residues 253 to 272 (KRLLFYKYMHKKYRTDKHRG) is putative calmodulin-binding region. Calx-beta domains follow at residues 386–485 (VHTD…VRLS) and 519–619 (ATVT…IALG). Ca(2+)-binding residues include Glu409, Asp445, Asp470, Asp471, Ile473, Glu475, Glu478, Asp525, Asp526, Asp527, Glu543, Asp579, Glu606, Glu607, and Glu672. Residues 727–747 (CFDYVMHFLTVFWKVLFACVP) traverse the membrane as a helical segment. Topologically, residues 748 to 754 (PTEYCHG) are extracellular. The chain crosses the membrane as a helical span at residues 755 to 775 (WACFAVSILIIGMLTAIIGDL). Topologically, residues 776-778 (ASH) are cytoplasmic. A helical transmembrane segment spans residues 779 to 799 (FGCTIGLKDSVTAVVFVAFGT). Residues 796-832 (AFGTSVPDTFASKAAALQDVYADASIGNVTGSNAVNV) form an Alpha-2 repeat. Topologically, residues 800-828 (SVPDTFASKAAALQDVYADASIGNVTGSN) are extracellular. Asn823 carries N-linked (GlcNAc...) asparagine glycosylation. A helical membrane pass occupies residues 829–849 (AVNVFLGIGLAWSVAAIYWAL). The Cytoplasmic segment spans residues 850–860 (QGQEFHVSAGT). Residues 861–881 (LAFSVTLFTIFAFVCISVLLY) traverse the membrane as a helical segment. Topologically, residues 882–903 (RRRPHLGGELGGPRGCKLATTW) are extracellular. Residues 904 to 924 (LFVSLWLLYILFATLEAYCYI) form a helical membrane-spanning segment. Residues 925–927 (KGF) lie on the Cytoplasmic side of the membrane.

Belongs to the Ca(2+):cation antiporter (CaCA) (TC 2.A.19) family. SLC8 subfamily. As to quaternary structure, interacts with AKAP1. Isoform 2 is expressed in brain and skeletal muscle. Isoform 3 is expressed in excitable cells of brain, retina and skeletal muscle. Isoform 4 is expressed in skeletal muscle.

It is found in the cell membrane. It localises to the perikaryon. Its subcellular location is the cell projection. The protein localises to the dendrite. The protein resides in the dendritic spine. It is found in the sarcolemma. It localises to the cytoplasm. Its subcellular location is the sarcoplasm. The protein localises to the cell junction. The protein resides in the mitochondrion outer membrane. It is found in the perinuclear region. It localises to the endoplasmic reticulum membrane. The enzyme catalyses Ca(2+)(in) + 3 Na(+)(out) = Ca(2+)(out) + 3 Na(+)(in). Its activity is regulated as follows. Calcium transport is down-regulated by Na(+) and stimulated by Ca(2+). Functionally, mediates the electrogenic exchange of Ca(2+) against Na(+) ions across the cell membrane, and thereby contributes to the regulation of cytoplasmic Ca(2+) levels and Ca(2+)-dependent cellular processes. Contributes to cellular Ca(2+) homeostasis in excitable cells, both in muscle and in brain. In a first phase, voltage-gated channels mediate the rapid increase of cytoplasmic Ca(2+) levels due to release of Ca(2+) stores from the endoplasmic reticulum. SLC8A3 mediates the export of Ca(2+) from the cell during the next phase, so that cytoplasmic Ca(2+) levels rapidly return to baseline. Contributes to Ca(2+) transport during excitation-contraction coupling in muscle. In neurons, contributes to the rapid decrease of cytoplasmic Ca(2+) levels back to baseline after neuronal activation, and thereby contributes to modulate synaptic plasticity, learning and memory. Required for normal oligodendrocyte differentiation and for normal myelination. Mediates Ca(2+) efflux from mitochondria and contributes to mitochondrial Ca(2+) ion homeostasis. This Homo sapiens (Human) protein is Sodium/calcium exchanger 3 (SLC8A3).